Consider the following 225-residue polypeptide: NAD(P)H-quinone oxidoreductase subunit K, chloroplastic (225 aa).

Positions 43, 44, 108, and 139 each coordinate [4Fe-4S] cluster.

The protein belongs to the complex I 20 kDa subunit family. NDH is composed of at least 16 different subunits, 5 of which are encoded in the nucleus. It depends on [4Fe-4S] cluster as a cofactor.

It is found in the plastid. The protein resides in the chloroplast thylakoid membrane. The catalysed reaction is a plastoquinone + NADH + (n+1) H(+)(in) = a plastoquinol + NAD(+) + n H(+)(out). It carries out the reaction a plastoquinone + NADPH + (n+1) H(+)(in) = a plastoquinol + NADP(+) + n H(+)(out). In terms of biological role, NDH shuttles electrons from NAD(P)H:plastoquinone, via FMN and iron-sulfur (Fe-S) centers, to quinones in the photosynthetic chain and possibly in a chloroplast respiratory chain. The immediate electron acceptor for the enzyme in this species is believed to be plastoquinone. Couples the redox reaction to proton translocation, and thus conserves the redox energy in a proton gradient. The protein is NAD(P)H-quinone oxidoreductase subunit K, chloroplastic of Arabidopsis thaliana (Mouse-ear cress).